We begin with the raw amino-acid sequence, 190 residues long: Ras-related protein RabF1 (190 aa).

A GTP-binding site is contributed by G15–T22. Residues H37–F44 carry the Effector region motif. GTP-binding positions include D62–E66 and N119–D122. C187 bears the Cysteine methyl ester mark. The S-geranylgeranyl cysteine moiety is linked to residue C187. Positions I188–N190 are cleaved as a propeptide — removed in mature form.

The protein belongs to the small GTPase superfamily. Rab family.

Its subcellular location is the cell membrane. The protein is Ras-related protein RabF1 (rabF1-1) of Dictyostelium discoideum (Social amoeba).